An 89-amino-acid chain; its full sequence is UPF0145 protein MJ1170 (89 aa).

It belongs to the UPF0145 family. Highly divergent.

In Methanocaldococcus jannaschii (strain ATCC 43067 / DSM 2661 / JAL-1 / JCM 10045 / NBRC 100440) (Methanococcus jannaschii), this protein is UPF0145 protein MJ1170.